The following is a 1486-amino-acid chain: Chromosome partition protein MukB (1486 aa).

ATP is bound at residue 34-41 (GGNGAGKS). Coiled-coil stretches lie at residues 326-418 (LEAD…QYNQ), 444-480 (LETF…QAYQ), and 509-603 (RHLA…RAPV). Positions 666-783 (PGGSEDQRLN…EVPLFGRAAR (118 aa)) are flexible hinge. Coiled-coil stretches lie at residues 835 to 923 (EAEI…AKLE), 977 to 1115 (EMLS…TAKA), and 1209 to 1266 (VEAI…QNVS).

This sequence belongs to the SMC family. MukB subfamily. Homodimerization via its hinge domain. Binds to DNA via its C-terminal region. Interacts, and probably forms a ternary complex, with MukE and MukF via its C-terminal region. The complex formation is stimulated by calcium or magnesium. Interacts with tubulin-related protein FtsZ.

It is found in the cytoplasm. The protein localises to the nucleoid. Plays a central role in chromosome condensation, segregation and cell cycle progression. Functions as a homodimer, which is essential for chromosome partition. Involved in negative DNA supercoiling in vivo, and by this means organize and compact chromosomes. May achieve or facilitate chromosome segregation by condensation DNA from both sides of a centrally located replisome during cell division. The chain is Chromosome partition protein MukB from Shigella flexneri serotype 5b (strain 8401).